Here is a 234-residue protein sequence, read N- to C-terminus: Phosphoglycolate phosphatase (234 aa).

Aspartate 13 (nucleophile) is an active-site residue. Mg(2+)-binding residues include aspartate 13, aspartate 15, and aspartate 175.

It belongs to the HAD-like hydrolase superfamily. CbbY/CbbZ/Gph/YieH family. Monomer. The cofactor is Mg(2+). It depends on chloride as a cofactor.

The enzyme catalyses 2-phosphoglycolate + H2O = glycolate + phosphate. It participates in organic acid metabolism; glycolate biosynthesis; glycolate from 2-phosphoglycolate: step 1/1. In terms of biological role, specifically catalyzes the dephosphorylation of 2-phosphoglycolate. Is involved in the dissimilation of the intracellular 2-phosphoglycolate formed during the DNA repair of 3'-phosphoglycolate ends, a major class of DNA lesions induced by oxidative stress. The sequence is that of Phosphoglycolate phosphatase from Pectobacterium atrosepticum (strain SCRI 1043 / ATCC BAA-672) (Erwinia carotovora subsp. atroseptica).